The primary structure comprises 272 residues: Cerberus (272 aa).

Residues 1 to 17 (MHLLLVQLLVLLPLGKA) form the signal peptide. 4 cysteine pairs are disulfide-bonded: C162–C209, C176–C223, C186–C239, and C190–C241. The region spanning 162-246 (CRTVPFNQTI…EECQCMVKTE (85 aa)) is the CTCK domain. N-linked (GlcNAc...) asparagine glycans are attached at residues N168 and N222.

Belongs to the DAN family. Forms monomers and predominantly dimers. Post-translationally, N-glycosylated.

It localises to the secreted. Its function is as follows. Cytokine that may play a role in anterior neural induction and somite formation during embryogenesis in part, through a BMP-inhibitory mechanism. Can regulate Nodal signaling during gastrulation as well as the formation and patterning of the primitive streak. The sequence is that of Cerberus (Cer1) from Mus musculus (Mouse).